The primary structure comprises 168 residues: Crossover junction endodeoxyribonuclease RuvC (168 aa).

Active-site residues include aspartate 9, glutamate 70, and aspartate 145. 3 residues coordinate Mg(2+): aspartate 9, glutamate 70, and aspartate 145.

It belongs to the RuvC family. In terms of assembly, homodimer which binds Holliday junction (HJ) DNA. The HJ becomes 2-fold symmetrical on binding to RuvC with unstacked arms; it has a different conformation from HJ DNA in complex with RuvA. In the full resolvosome a probable DNA-RuvA(4)-RuvB(12)-RuvC(2) complex forms which resolves the HJ. The cofactor is Mg(2+).

The protein localises to the cytoplasm. The catalysed reaction is Endonucleolytic cleavage at a junction such as a reciprocal single-stranded crossover between two homologous DNA duplexes (Holliday junction).. Its function is as follows. The RuvA-RuvB-RuvC complex processes Holliday junction (HJ) DNA during genetic recombination and DNA repair. Endonuclease that resolves HJ intermediates. Cleaves cruciform DNA by making single-stranded nicks across the HJ at symmetrical positions within the homologous arms, yielding a 5'-phosphate and a 3'-hydroxyl group; requires a central core of homology in the junction. The consensus cleavage sequence is 5'-(A/T)TT(C/G)-3'. Cleavage occurs on the 3'-side of the TT dinucleotide at the point of strand exchange. HJ branch migration catalyzed by RuvA-RuvB allows RuvC to scan DNA until it finds its consensus sequence, where it cleaves and resolves the cruciform DNA. The sequence is that of Crossover junction endodeoxyribonuclease RuvC from Chlamydia caviae (strain ATCC VR-813 / DSM 19441 / 03DC25 / GPIC) (Chlamydophila caviae).